Consider the following 497-residue polypeptide: Di-/tripeptide transporter (497 aa).

At 1–36 the chain is on the cytoplasmic side; it reads MQNLNKTEKTFFGQPRGLLTLFQTEFWERFSYYGMR. Residues 37 to 55 traverse the membrane as a helical segment; sequence AILVYYLYALTTADNAGLG. Residues 56–64 lie on the Extracellular side of the membrane; that stretch reads LPKAQAMAI. The chain crosses the membrane as a helical span at residues 65–83; the sequence is VSIYGALVYLSTIVGGWVA. The Cytoplasmic portion of the chain corresponds to 84 to 92; sequence DRLLGASRT. Residues 93 to 111 traverse the membrane as a helical segment; that stretch reads IFLGGILITLGHVALATPF. Topologically, residues 112–115 are extracellular; that stretch reads GLSS. A helical transmembrane segment spans residues 116 to 134; that stretch reads LFVALFLIILGTGMLKPNI. Residues 135–154 lie on the Cytoplasmic side of the membrane; that stretch reads SNMVGHLYSKDDSRRDTGFN. Residues 155–173 traverse the membrane as a helical segment; sequence IFVVGINMGSLIAPLIVGT. Residues 174–181 are Extracellular-facing; that stretch reads VGQGVNYH. A helical transmembrane segment spans residues 182-200; that stretch reads LGFSLAAIGMIFALFAYWY. Residues 201-224 lie on the Cytoplasmic side of the membrane; that stretch reads GRLRHFPEIGREPSNPMDAKAKRN. A helical transmembrane segment spans residues 225-243; that stretch reads FIITLTIVLIVALIGFFLI. Residues 244 to 254 are Extracellular-facing; it reads YQASPANFINN. A helical membrane pass occupies residues 255-273; sequence FINVLSIIGIVVPIIYFVM. At 274 to 293 the chain is on the cytoplasmic side; it reads MFTSKKVESDERRKLTAYIP. The chain crosses the membrane as a helical span at residues 294–312; the sequence is LFLSAIVFWAIEEQSSTII. Over 313-335 the chain is Extracellular; sequence AVWGESRSNLNPTWFGFTFHIDP. The chain crosses the membrane as a helical span at residues 336-354; it reads SWYQLLNPLFIVLLSPIFV. At 355-372 the chain is on the cytoplasmic side; the sequence is RIWNKLGDRQPSTIVKFG. The chain crosses the membrane as a helical span at residues 373–391; sequence LGLMLTGASYLIMTLPGLL. Over 392–425 the chain is Extracellular; it reads NGTSGRASALWLVLMFAVQMAGELLVSPVGLSVS. Residues 426 to 444 traverse the membrane as a helical segment; it reads TKLAPVAFQSQMMAMWFLA. Topologically, residues 445-497 are cytoplasmic; that stretch reads DSTSQAINAQITPIFKAATEVHFFAITGIIGIIVGIILLIIKKPILKLMGDVR.

The protein belongs to the major facilitator superfamily. Proton-dependent oligopeptide transporter (POT/PTR) (TC 2.A.17) family.

It is found in the cell membrane. Its function is as follows. Proton-dependent uptake of di- or tri-peptides. The chain is Di-/tripeptide transporter (dtpT) from Lactococcus lactis subsp. cremoris (Streptococcus cremoris).